The sequence spans 378 residues: Spermidine/putrescine import ATP-binding protein PotA (378 aa).

The region spanning 18 to 248 is the ABC transporter domain; sequence VQLAGIRKCF…PKNLFVAGFI (231 aa). Position 50-57 (50-57) interacts with ATP; it reads GPSGCGKT.

It belongs to the ABC transporter superfamily. Spermidine/putrescine importer (TC 3.A.1.11.1) family. The complex is composed of two ATP-binding proteins (PotA), two transmembrane proteins (PotB and PotC) and a solute-binding protein (PotD).

The protein localises to the cell inner membrane. It carries out the reaction ATP + H2O + polyamine-[polyamine-binding protein]Side 1 = ADP + phosphate + polyamineSide 2 + [polyamine-binding protein]Side 1.. In terms of biological role, part of the ABC transporter complex PotABCD involved in spermidine/putrescine import. Responsible for energy coupling to the transport system. This Shigella boydii serotype 4 (strain Sb227) protein is Spermidine/putrescine import ATP-binding protein PotA.